Reading from the N-terminus, the 464-residue chain is Soluble pyridine nucleotide transhydrogenase (464 aa).

An FAD-binding site is contributed by 35–44; that stretch reads EDKSQVGGNC.

This sequence belongs to the class-I pyridine nucleotide-disulfide oxidoreductase family. Requires FAD as cofactor.

The protein localises to the cytoplasm. It carries out the reaction NAD(+) + NADPH = NADH + NADP(+). Its function is as follows. Conversion of NADPH, generated by peripheral catabolic pathways, to NADH, which can enter the respiratory chain for energy generation. This is Soluble pyridine nucleotide transhydrogenase from Hahella chejuensis (strain KCTC 2396).